A 327-amino-acid polypeptide reads, in one-letter code: D-alanine--D-alanine ligase (327 aa).

The region spanning K113 to A312 is the ATP-grasp domain. ATP is bound at residue V139–T194. D266, E279, and N281 together coordinate Mg(2+).

It belongs to the D-alanine--D-alanine ligase family. Mg(2+) is required as a cofactor. Mn(2+) serves as cofactor.

The protein resides in the cytoplasm. The catalysed reaction is 2 D-alanine + ATP = D-alanyl-D-alanine + ADP + phosphate + H(+). Its pathway is cell wall biogenesis; peptidoglycan biosynthesis. Functionally, cell wall formation. In Cupriavidus taiwanensis (strain DSM 17343 / BCRC 17206 / CCUG 44338 / CIP 107171 / LMG 19424 / R1) (Ralstonia taiwanensis (strain LMG 19424)), this protein is D-alanine--D-alanine ligase.